We begin with the raw amino-acid sequence, 620 residues long: DNA primase (620 aa).

A CHC2-type zinc finger spans residues 38–62; that stretch reads CPFHADQNPSMTVSVAKNIFKCFSC. Residues 266-350 form the Toprim domain; sequence LKLYLVEGYF…IVEVVDWNQA (85 aa). Glutamate 272, aspartate 319, and aspartate 321 together coordinate Mg(2+).

Belongs to the DnaG primase family. As to quaternary structure, monomer. Interacts with DnaB. Requires Zn(2+) as cofactor. Mg(2+) serves as cofactor.

It carries out the reaction ssDNA + n NTP = ssDNA/pppN(pN)n-1 hybrid + (n-1) diphosphate.. Its function is as follows. RNA polymerase that catalyzes the synthesis of short RNA molecules used as primers for DNA polymerase during DNA replication. The sequence is that of DNA primase from Mycoplasma pneumoniae (strain ATCC 29342 / M129 / Subtype 1) (Mycoplasmoides pneumoniae).